Consider the following 426-residue polypeptide: MNKLENPLQNDIAGPAPRHRTTQVMVGQVAVGGGAPIVVQSMTNTDTADIQGTIDQVARLSQAGSEMVRITVDRDEAAAAVPHIRDGLRKRGITTPLIGDFHYIGHKLLADYPACAEALDKYRINPGNVGFKNKRDTQFTDIVEIALKNDKAVRIGANWGSLDQELLTKLMDENAVSATPRDVRAVTREAMVQSALLSAARAEEIGLPKTKMILSAKVSSVQDLIAVYQDLASRSDYAIHLGLTEAGMGSKGIVASSAALGILLQQGIGDTIRISLTPEPGGDRTLEVQVAQELLQTMGFRTFVPLVAACPGCGRTTSTTFQELARSIQDFIRVEMPAWKTRYPGVENLNVAVMGCIVNGPGESKHANIGISLPGTGETPAAPVFVDGEKVKTLRGPTIAAEFKAMVIDYIEHKYGAGAPAVTAAE.

The [4Fe-4S] cluster site is built by cysteine 310, cysteine 313, cysteine 356, and glutamate 363.

The protein belongs to the IspG family. Requires [4Fe-4S] cluster as cofactor.

It carries out the reaction (2E)-4-hydroxy-3-methylbut-2-enyl diphosphate + oxidized [flavodoxin] + H2O + 2 H(+) = 2-C-methyl-D-erythritol 2,4-cyclic diphosphate + reduced [flavodoxin]. It functions in the pathway isoprenoid biosynthesis; isopentenyl diphosphate biosynthesis via DXP pathway; isopentenyl diphosphate from 1-deoxy-D-xylulose 5-phosphate: step 5/6. Converts 2C-methyl-D-erythritol 2,4-cyclodiphosphate (ME-2,4cPP) into 1-hydroxy-2-methyl-2-(E)-butenyl 4-diphosphate. In Rhodopseudomonas palustris (strain BisA53), this protein is 4-hydroxy-3-methylbut-2-en-1-yl diphosphate synthase (flavodoxin).